The primary structure comprises 425 residues: Succinate--CoA ligase [ADP-forming] subunit beta, mitochondrial (425 aa).

A mitochondrion-targeting transit peptide spans 1-14; the sequence is NNHGLQIQQQQQRN. One can recognise an ATP-grasp domain in the interval 23–250; it reads MELLQEAGVS…SNSAYRQKKI (228 aa). K40 carries the N6-acetyllysine modification. A Phosphotyrosine modification is found at Y46. K50 carries the N6-acetyllysine; alternate modification. K50 is modified (N6-succinyllysine; alternate). Residues K60 and 67–69 each bind ATP; that span reads GRG. Residues K91, K101, K105, and K178 each carry the N6-acetyllysine modification. Positions 220 and 234 each coordinate Mg(2+). S241 carries the phosphoserine modification. N285 is a binding site for substrate. T303 is subject to Phosphothreonine. N6-acetyllysine is present on K330. Substrate is bound at residue 342-344; that stretch reads GIM. Position 400 is an N6-acetyllysine (K400).

This sequence belongs to the succinate/malate CoA ligase beta subunit family. ATP-specific subunit beta subfamily. Heterodimer of an alpha and a beta subunit. The beta subunit determines specificity for ATP. Interacts with ALAS2. The cofactor is Mg(2+).

Its subcellular location is the mitochondrion. It carries out the reaction succinate + ATP + CoA = succinyl-CoA + ADP + phosphate. Its pathway is carbohydrate metabolism; tricarboxylic acid cycle; succinate from succinyl-CoA (ligase route): step 1/1. Its function is as follows. ATP-specific succinyl-CoA synthetase functions in the citric acid cycle (TCA), coupling the hydrolysis of succinyl-CoA to the synthesis of ATP and thus represents the only step of substrate-level phosphorylation in the TCA. The beta subunit provides nucleotide specificity of the enzyme and binds the substrate succinate, while the binding sites for coenzyme A and phosphate are found in the alpha subunit. The polypeptide is Succinate--CoA ligase [ADP-forming] subunit beta, mitochondrial (Sus scrofa (Pig)).